The chain runs to 792 residues: Ribonucleoside-diphosphate reductase large subunit (792 aa).

The region spanning 1–92 (MHVIKRDGRQ…VSNLHKETKK (92 aa)) is the ATP-cone domain. Residues 5 to 6 (KR), 11 to 17 (ERVMFDK), threonine 53, and aspartate 57 contribute to the ATP site. N6-acetyllysine is present on lysine 17. GDP contacts are provided by serine 202 and serine 217. The cysteines at positions 218 and 444 are disulfide-linked. Residues 226 to 228 (DSI), lysine 243, arginine 256, and 263 to 264 (AG) contribute to the dTTP site. N6-acetyllysine is present on lysine 376. Asparagine 427 is a binding site for GDP. Asparagine 427 acts as the Proton acceptor in catalysis. Cysteine 429 serves as the catalytic Cysteine radical intermediate. GDP is bound by residues glutamate 431 and 604-607 (TAST). The active-site Proton acceptor is the glutamate 431. The residue at position 751 (threonine 751) is a Phosphothreonine.

Belongs to the ribonucleoside diphosphate reductase large chain family. Heterodimer of a large and a small subunit. Interacts with RRM2B. Interacts with AHCYL1 which inhibits its activity.

It is found in the cytoplasm. It catalyses the reaction a 2'-deoxyribonucleoside 5'-diphosphate + [thioredoxin]-disulfide + H2O = a ribonucleoside 5'-diphosphate + [thioredoxin]-dithiol. Under complex allosteric control mediated by deoxynucleoside triphosphates and ATP binding to separate specificity and activation sites on the M1 subunit. The type of nucleotide bound at the specificity site determines substrate preference. It seems probable that ATP makes the enzyme reduce CDP and UDP, dGTP favors ADP reduction and dTTP favors GDP reduction. Stimulated by ATP and inhibited by dATP binding to the activity site, the dATP inhibition is mediated by AHCYL1 which stabilizes dATP in the site. In terms of biological role, provides the precursors necessary for DNA synthesis. Catalyzes the biosynthesis of deoxyribonucleotides from the corresponding ribonucleotides. This is Ribonucleoside-diphosphate reductase large subunit (Rrm1) from Mus musculus (Mouse).